The primary structure comprises 188 residues: Protease-associated domain-containing protein 1 (188 aa).

The N-terminal stretch at 1–21 (MSRGAAGWCCLVLWLPTCVAA) is a signal peptide. One can recognise a PA domain in the interval 83–163 (IQDQIALVER…RSLEQHGLPW (81 aa)). N-linked (GlcNAc...) asparagine glycans are attached at residues Asn121 and Asn171.

Post-translationally, N-glycosylated; required for efficient secretion. Expressed in metabolically active tissues such as liver, muscle, adipose, and heart and different brain regions like cortex and hypothalamus, expression is acutely regulated by the nutritional state.

Its subcellular location is the secreted. Functionally, plays a role in the modulation of physical activity and adiposity. The sequence is that of Protease-associated domain-containing protein 1 from Mus musculus (Mouse).